The primary structure comprises 171 residues: tRNA-specific adenosine deaminase (171 aa).

Positions 6–133 (EEQTYFMQEA…ERLNHRVQVE (128 aa)) constitute a CMP/dCMP-type deaminase domain. His-57 lines the Zn(2+) pocket. The active-site Proton donor is the Glu-59. Positions 87 and 90 each coordinate Zn(2+).

It belongs to the cytidine and deoxycytidylate deaminase family. As to quaternary structure, homodimer. The cofactor is Zn(2+).

The enzyme catalyses adenosine(34) in tRNA + H2O + H(+) = inosine(34) in tRNA + NH4(+). Functionally, catalyzes the deamination of adenosine to inosine at the wobble position 34 of tRNA(Arg2). This is tRNA-specific adenosine deaminase from Streptococcus pyogenes serotype M1.